The following is a 155-amino-acid chain: Small ribosomal subunit protein uS9 (155 aa).

This sequence belongs to the universal ribosomal protein uS9 family.

The protein is Small ribosomal subunit protein uS9 of Allorhizobium ampelinum (strain ATCC BAA-846 / DSM 112012 / S4) (Agrobacterium vitis (strain S4)).